We begin with the raw amino-acid sequence, 207 residues long: 8-oxoguanine DNA glycosylase/AP lyase (207 aa).

Active-site residues include K128 and D146.

Belongs to the type-2 OGG1 family.

It catalyses the reaction 2'-deoxyribonucleotide-(2'-deoxyribose 5'-phosphate)-2'-deoxyribonucleotide-DNA = a 3'-end 2'-deoxyribonucleotide-(2,3-dehydro-2,3-deoxyribose 5'-phosphate)-DNA + a 5'-end 5'-phospho-2'-deoxyribonucleoside-DNA + H(+). Its function is as follows. Catalyzes the excision of an oxidatively damaged form of guanine (7,8-dihydro-8-oxoguanine = 8-oxoG) from DNA. Also cleaves the DNA backbone at apurinic/apyrimidinic sites (AP sites). This is 8-oxoguanine DNA glycosylase/AP lyase from Saccharolobus islandicus (strain L.S.2.15 / Lassen #1) (Sulfolobus islandicus).